Consider the following 245-residue polypeptide: 8-amino-3,8-dideoxy-manno-octulosonate cytidylyltransferase (245 aa).

The protein belongs to the KdsB family.

It localises to the cytoplasm. The catalysed reaction is 8-amino-3,8-dideoxy-alpha-D-manno-octulosonate + CTP = CMP-8-amino-3,8-dideoxy-alpha-D-manno-oct-2-ulosonate + diphosphate. The protein operates within bacterial outer membrane biogenesis; lipopolysaccharide biosynthesis. In terms of biological role, activates KDO8N (a required 8-carbon sugar) for incorporation into bacterial lipopolysaccharide in the Shewanella genus. The polypeptide is 8-amino-3,8-dideoxy-manno-octulosonate cytidylyltransferase (Shewanella pealeana (strain ATCC 700345 / ANG-SQ1)).